Reading from the N-terminus, the 653-residue chain is Asparagine--tRNA ligase, cytoplasmic (653 aa).

It belongs to the class-II aminoacyl-tRNA synthetase family.

It localises to the cytoplasm. The enzyme catalyses tRNA(Asn) + L-asparagine + ATP = L-asparaginyl-tRNA(Asn) + AMP + diphosphate + H(+). This chain is Asparagine--tRNA ligase, cytoplasmic (asnS1), found in Dictyostelium discoideum (Social amoeba).